The sequence spans 339 residues: Serine racemase (339 aa).

Glu-13 contacts Mg(2+). Residues Ser-31, Ser-32, Ile-33, Lys-51, and Thr-52 each contribute to the ATP site. Catalysis depends on Lys-56, which acts as the Proton acceptor. An N6-(pyridoxal phosphate)lysine modification is found at Lys-56. Pro-69 serves as a coordination point for Ca(2+). Phosphothreonine is present on Thr-71. A Ca(2+)-binding site is contributed by Thr-81. Catalysis depends on Ser-84, which acts as the Proton acceptor. A pyridoxal 5'-phosphate-binding site is contributed by Asn-86. An ATP-binding site is contributed by Gln-89. Cys-113 is modified (S-nitrosocysteine). Tyr-121 contacts ATP. Residue Asn-154 coordinates pyridoxal 5'-phosphate. Asp-178 contributes to the Mg(2+) binding site. 5 residues coordinate pyridoxal 5'-phosphate: Gly-185, Gly-186, Gly-187, Gly-188, and Met-189. Mg(2+) contacts are provided by Glu-210, Ala-214, Asp-216, and Asn-247. The Ca(2+) site is built by Glu-210, Ala-214, Asp-216, and Asn-247. 3 residues coordinate Mn(2+): Glu-210, Ala-214, and Asp-216. Position 279 (Lys-279) interacts with ATP. Ser-313 contributes to the pyridoxal 5'-phosphate binding site. Asn-316 lines the ATP pocket.

Belongs to the serine/threonine dehydratase family. As to quaternary structure, homodimer. Mg(2+) serves as cofactor. Requires Mn(2+) as cofactor. The cofactor is Ca(2+). Pyridoxal 5'-phosphate is required as a cofactor. In terms of processing, S-nitrosylated, leading to decrease the enzyme activity. Expressed in the hippocampus (at protein level). Expressed in the small intestine.

The enzyme catalyses L-serine = D-serine. It carries out the reaction D-serine = pyruvate + NH4(+). The catalysed reaction is L-serine = pyruvate + NH4(+). Its activity is regulated as follows. Allosterically activated by magnesium, and possibly also other divalent metal cations. Allosterically activated by ATP, ADP or GTP. Its function is as follows. Catalyzes the synthesis of D-serine from L-serine. D-serine is a key coagonist with glutamate at NMDA receptors. Has dehydratase activity towards both L-serine and D-serine. The protein is Serine racemase (Srr) of Mus musculus (Mouse).